Here is a 169-residue protein sequence, read N- to C-terminus: Calfumirin-1 (169 aa).

4 EF-hand domains span residues 6-41 (NIVEEVQKMLDTYDTNKDGEITKAEAVEYFKGKKAF), 42-77 (NPERSAIYLFQVYDKDNDGKITIKELAGDIDFDKAL), 93-128 (EVEEDIEAFILRHNKDDNTDITKDELIQGFKETGAK), and 129-164 (DPEKSANFILTEMDTNKDGTITVKELRVYYQKVQKL). Ca(2+) is bound by residues Asp19, Asn21, Asp23, Glu25, Glu30, Asp55, Asp57, Asp59, Lys61, Glu66, Asp108, Asn110, Asp112, Glu117, Asp142, Asn144, Asp146, Thr148, and Glu153.

In terms of biological role, may be involved in the phase-shift of cells from growth to differentiation. The polypeptide is Calfumirin-1 (cafA) (Dictyostelium discoideum (Social amoeba)).